Here is a 212-residue protein sequence, read N- to C-terminus: 2,3-bisphosphoglycerate-dependent phosphoglycerate mutase (212 aa).

Substrate is bound by residues 9–16 (RHGQSEWN), 22–23 (TG), Arg-61, 88–91 (ERDY), Lys-99, 115–116 (RR), and 159–160 (GN). The Tele-phosphohistidine intermediate role is filled by His-10. Catalysis depends on Glu-88, which acts as the Proton donor/acceptor.

It belongs to the phosphoglycerate mutase family. BPG-dependent PGAM subfamily. In terms of assembly, homodimer.

It carries out the reaction (2R)-2-phosphoglycerate = (2R)-3-phosphoglycerate. Its pathway is carbohydrate degradation; glycolysis; pyruvate from D-glyceraldehyde 3-phosphate: step 3/5. Its function is as follows. Catalyzes the interconversion of 2-phosphoglycerate and 3-phosphoglycerate. The protein is 2,3-bisphosphoglycerate-dependent phosphoglycerate mutase of Methylorubrum populi (strain ATCC BAA-705 / NCIMB 13946 / BJ001) (Methylobacterium populi).